The primary structure comprises 387 residues: F-box only protein 4 (387 aa).

Phosphoserine occurs at positions 11, 12, and 48. The 47-residue stretch at 56 to 102 folds into the F-box domain; it reads ASSLTRLPIDVQLYILSFLSPHDLCQLGSTSRYWNETVRDPILWRYF.

Homodimer. Part of the SCF (SKP1-CUL1-F-box) E3 ubiquitin-protein ligase complex SCF(FBXO4) formed of CUL1, SKP1, RBX1 and FBXO4. Interacts with TERF1; this interaction is prevented in the presence of GNL3L. Identified in a complex with CRYAB and CCND1. Phosphorylation at Ser-11 varies during the cell cycle. It is low in resting cells and high in the S phase and the G2/M phase of the cell cycle. Phosphorylation is decreased during late G1 phase. Phosphorylation at Ser-11 promotes homodimerization and is necessary for optimal ubiquitin ligase activity towards CCND1.

It is found in the cytoplasm. It participates in protein modification; protein ubiquitination. In terms of biological role, substrate recognition component of a SCF (SKP1-CUL1-F-box protein) E3 ubiquitin-protein ligase complex that mediates the ubiquitination and subsequent proteasomal degradation of target proteins. Promotes ubiquitination of cyclin-D1 (CCND1) and its subsequent proteasomal degradation. However, it does not act as a major regulator of CCND1 stability during the G1/S transition. Recognizes TERF1 and promotes its ubiquitination together with UBE2D1. Promotes ubiquitination of FXR1 following phosphorylation of FXR1 by GSK3B, leading to FXR1 degradation by the proteasome. The protein is F-box only protein 4 (FBXO4) of Bos taurus (Bovine).